The chain runs to 164 residues: Zinc finger A20 and AN1 domain-containing stress-associated protein 1 (164 aa).

Residues 16-50 (APEITLCANSCGFPGNPATQNLCQNCFLAATASTS) form an A20-type zinc finger. Residues cysteine 22, cysteine 26, cysteine 38, and cysteine 41 each coordinate Zn(2+). A compositionally biased stretch (low complexity) spans 48-58 (STSSPSSLSSP). The segment at 48 to 81 (STSSPSSLSSPVLDKQPPRPAAPLVEPQAPLPPP) is disordered. The AN1-type zinc-finger motif lies at 99–145 (TSAVNRCSRCRKRVGLTGFRCRCGHLFCGEHRYSDRHGCSYDYKSAA). Positions 105, 108, 119, 121, 126, 129, 135, and 137 each coordinate Zn(2+).

Its function is as follows. May be involved in environmental stress response. This chain is Zinc finger A20 and AN1 domain-containing stress-associated protein 1 (SAP1), found in Oryza sativa subsp. indica (Rice).